Consider the following 353-residue polypeptide: MPPPQRFRVQSKNYFLTYPRCTIPKEEALSQLQKIHTTTNKKFIKVCEERHDNGEPHLHALIQFEGKFICTNKRLFDLVSTTRSAHFHPNIQGAKSSSDVKEYIDKDGVTIEWGQFQVDGRSARGGQQSANDSYAKALNADSIESALTILKEEQPKDYVLQNHNIRSNLERIFFKVPEPWVPPFPLSSFVNIPVVMQDWVDDYFGRGSAARPERPISIIVEGDSRTGKTMWARALGPHNYLSGHLDFNSLVYSNSVEYNVIDDITPNYLKLKDWKELIGEQKDWQSNCKYGKPVQIKGGIPSIVLCNPGEGSSYKDFLNKEEKPALHNWTIHNAIFVTLTAPLYQSTAQDCQT.

Positions 8–116 constitute a CRESS-DNA virus Rep endonuclease domain; the sequence is RVQSKNYFLT…DGVTIEWGQF (109 aa). Positions 15–18 match the RCR-1 motif; it reads FLTY. Glutamate 49, histidine 57, and histidine 59 together coordinate a divalent metal cation. The short motif at 57–59 is the RCR-2 element; that stretch reads HLH. Residue tyrosine 103 is the For DNA cleavage activity of the active site. Residues 103 to 106 carry the RCR-3 motif; it reads YIDK. Position 107 (aspartate 107) interacts with a divalent metal cation. A binding to RBR1 region spans residues 143–153; sequence IESALTILKEE. Residues 156 to 176 form an oligomerization region; the sequence is KDYVLQNHNIRSNLERIFFKV. 222–229 provides a ligand contact to ATP; it reads GDSRTGKT.

It belongs to the geminiviridae Rep protein family. Homooligomer. Interacts with the replication enhancer protein (REn). Interacts with host retinoblastoma-related protein 1 (RBR1), and may thereby induce the transcription of host replicative enzymes even if the cell is not dividing anymore. Interacts with host PCNA. Interacts with host SCE1 protein. The cofactor is Mg(2+). It depends on Mn(2+) as a cofactor.

It localises to the host nucleus. Its function is as follows. Essential for the replication of viral ssDNA. The closed circular ssDNA genome is first converted to a superhelical dsDNA. Rep binds a specific region at the genome origin of replication. It introduces an endonucleolytic nick within the conserved sequence 5'-TAATATTAC-3' in the intergenic region of the genome present in all geminiviruses, thereby initiating the rolling circle replication (RCR). Following cleavage, binds covalently to the 5'-phosphate of DNA as a tyrosyl ester. The cleavage gives rise to a free 3'-OH that serves as a primer for the cellular DNA polymerase. The polymerase synthesizes the (+) strand DNA by rolling circle mechanism. After one round of replication, a Rep-catalyzed nucleotidyl transfer reaction releases a circular single-stranded virus genome, thereby terminating the replication. Displays origin-specific DNA cleavage, nucleotidyl transferase, ATPase and helicase activities. The protein is Replication-associated protein of Macroptilium lathyroides (Lima bean).